Consider the following 62-residue polypeptide: uncharacterized protein (62 aa).

The protein resides in the plastid. Its subcellular location is the chloroplast. This is an uncharacterized protein from Guillardia theta (Cryptophyte).